Reading from the N-terminus, the 466-residue chain is Asparagine--tRNA ligase (466 aa).

It belongs to the class-II aminoacyl-tRNA synthetase family. As to quaternary structure, homodimer.

The protein localises to the cytoplasm. It carries out the reaction tRNA(Asn) + L-asparagine + ATP = L-asparaginyl-tRNA(Asn) + AMP + diphosphate + H(+). This is Asparagine--tRNA ligase from Shewanella sp. (strain ANA-3).